The sequence spans 481 residues: Aspartyl/glutamyl-tRNA(Asn/Gln) amidotransferase subunit B (481 aa).

It belongs to the GatB/GatE family. GatB subfamily. As to quaternary structure, heterotrimer of A, B and C subunits.

It catalyses the reaction L-glutamyl-tRNA(Gln) + L-glutamine + ATP + H2O = L-glutaminyl-tRNA(Gln) + L-glutamate + ADP + phosphate + H(+). It carries out the reaction L-aspartyl-tRNA(Asn) + L-glutamine + ATP + H2O = L-asparaginyl-tRNA(Asn) + L-glutamate + ADP + phosphate + 2 H(+). Functionally, allows the formation of correctly charged Asn-tRNA(Asn) or Gln-tRNA(Gln) through the transamidation of misacylated Asp-tRNA(Asn) or Glu-tRNA(Gln) in organisms which lack either or both of asparaginyl-tRNA or glutaminyl-tRNA synthetases. The reaction takes place in the presence of glutamine and ATP through an activated phospho-Asp-tRNA(Asn) or phospho-Glu-tRNA(Gln). The chain is Aspartyl/glutamyl-tRNA(Asn/Gln) amidotransferase subunit B from Ehrlichia ruminantium (strain Gardel).